Consider the following 40-residue polypeptide: Amyloid-beta precursor protein (40 aa).

It belongs to the APP family. As to quaternary structure, binds, via its C-terminus, to the PID domain of several cytoplasmic proteins, including APBB family members, the APBA family, MAPK8IP1, SHC1 and NUMB and DAB1. Binding to DAB1 inhibits its serine phosphorylation. Interacts (via NPXY motif) with DAB2 (via PID domain); the interaction is impaired by tyrosine phosphorylation of the NPXY motif. Also interacts with GPCR-like protein BPP, APPBP1, IB1, KNS2 (via its TPR domains), APPBP2 (via BaSS) and DDB1. In vitro, it binds MAPT via the MT-binding domains. Associates with microtubules in the presence of ATP and in a kinesin-dependent manner. Interacts, through a C-terminal domain, with GNAO1. Interacts with CPEB1, ANKS1B and AGER. Interacts with ITM2B. Interacts with ITM2C. Interacts with IDE. Can form homodimers; dimerization is enhanced in the presence of Cu(2+) ions. Can form homodimers; this is promoted by heparin binding. Interacts with SORL1 (via N-terminal ectodomain); this interaction retains APP in the trans-Golgi network and reduces processing into soluble APP-alpha and amyloid-beta peptides. Interacts with PLD3. Interacts with VDAC1. Interacts with NSG1; could regulate APP processing. Interacts with LRRK2. Interacts (via cytoplasmic domain) with KIF5B. Interacts (via C-terminus) with APBB2/FE65L1 (via C-terminus). Interacts (via intracellular domain) with APBB3. Proteolytically processed under normal cellular conditions. Cleavage either by alpha-secretase, beta-secretase or theta-secretase leads to generation and extracellular release of soluble APP peptides, S-APP-alpha and S-APP-beta, and the retention of corresponding membrane-anchored C-terminal fragments, C80, C83 and C99. Subsequent processing of C80 and C83 by gamma-secretase yields P3 peptides. This is the major secretory pathway and is non-amyloidogenic. Alternatively, presenilin/nicastrin-mediated gamma-secretase processing of C99 releases the amyloid-beta proteins, amyloid-beta protein 40 and amyloid-beta protein 42, major components of amyloid plaques, and the cytotoxic C-terminal fragments, gamma-CTF(50), gamma-CTF(57) and gamma-CTF(59). PSEN1 cleavage is more efficient with C83 than with C99 as substrate (in vitro). Amyloid-beta protein 40 and Amyloid-beta protein 42 are cleaved by ACE. Many other minor amyloid-beta peptides, amyloid-beta 1-X peptides, are found in cerebral spinal fluid (CSF) including the amyloid-beta X-15 peptides, produced from the cleavage by alpha-secretase.

Its subcellular location is the cell membrane. The protein resides in the membrane. It is found in the perikaryon. The protein localises to the cell projection. It localises to the growth cone. Its subcellular location is the clathrin-coated pit. The protein resides in the early endosome. It is found in the cytoplasmic vesicle. In terms of biological role, functions as a cell surface receptor and performs physiological functions on the surface of neurons relevant to neurite growth, neuronal adhesion and axonogenesis. Interaction between APP molecules on neighboring cells promotes synaptogenesis. Involved in cell mobility and transcription regulation through protein-protein interactions. Can promote transcription activation through binding to APBB1-KAT5 and inhibit Notch signaling through interaction with Numb. Couples to apoptosis-inducing pathways such as those mediated by G(o) and JIP. Inhibits G(o)-alpha ATPase activity. Acts as a kinesin I membrane receptor, mediating the axonal transport of beta-secretase and presenilin 1. May be involved in copper homeostasis/oxidative stress through copper ion reduction. In vitro, copper-metallated APP induces neuronal death directly or is potentiated through Cu(2+)-mediated low-density lipoprotein oxidation. Can regulate neurite outgrowth through binding to components of the extracellular matrix such as heparin and collagen I and IV. Induces a AGER-dependent pathway that involves activation of p38 MAPK, resulting in internalization of amyloid-beta peptide and mitochondrial dysfunction in cultured cortical neurons. Provides Cu(2+) ions for GPC1 which are required for release of nitric oxide (NO) and subsequent degradation of the heparan sulfate chains on GPC1. The protein is Amyloid-beta precursor protein of Felis catus (Cat).